The chain runs to 344 residues: Meiotic recombination protein DMC1 homolog A (344 aa).

133 to 140 (GEFRSGKT) contacts ATP. Arg235 provides a ligand contact to dsDNA. SsDNA-binding residues include Arg235, Phe238, Arg241, Arg247, and Arg315. Positions 241 and 247 each coordinate dsDNA.

This sequence belongs to the RecA family. DMC1 subfamily. In terms of tissue distribution, expressed in pollen mother cells and root tips.

It is found in the nucleus. Its function is as follows. Recombinase that may participate in meiotic recombination, specifically in homologous strand assimilation, which is required for the resolution of meiotic double-strand breaks. Exhibits DNA-dependent ATPase activity when bound to single-stranded DNA (ssDNA). Mediates renaturation of homologous complementary strands as well as assimilation of single strands into homologous supercoiled duplexes leading to D-loop formation. Binds circular single-stranded DNA (ssDNA) and circular double-stranded DNA (dsDNA) in vitro. Catalyzes DNA homologous renaturation and DNA strand exchange. The rates of these activities are dependent on the state of ATP hydrolysis. Forms helical filaments along ssDNA and dsDNA, and promotes strand exchange between ssDNA and dsDNA with long DNA substrates of several thousand base pairs. The presence of the replication protein A is not required for this activity. Seems to be required for homologous pairing and subsequent chromosome segregation during male meiosis. May be not directly required for homologous pairing during male meiosis. Required for synaptonemal complex assembly and crossover formation. Functions redundantly with DMC1B. The polypeptide is Meiotic recombination protein DMC1 homolog A (Oryza sativa subsp. indica (Rice)).